A 257-amino-acid polypeptide reads, in one-letter code: Global transcriptional regulator CodY (257 aa).

Residues 1–155 (MSLLSKTREL…AATVIGMEIL (155 aa)) form a GAF domain region. Positions 203-222 (ASKVADRVGITRSVIVNALR) form a DNA-binding region, H-T-H motif.

This sequence belongs to the CodY family.

The protein localises to the cytoplasm. In terms of biological role, DNA-binding global transcriptional regulator which is involved in the adaptive response to starvation and acts by directly or indirectly controlling the expression of numerous genes in response to nutrient availability. During rapid exponential growth, CodY is highly active and represses genes whose products allow adaptation to nutrient depletion. In Staphylococcus haemolyticus (strain JCSC1435), this protein is Global transcriptional regulator CodY.